The chain runs to 277 residues: Large ribosomal subunit protein uL2 (277 aa).

Residues 219–277 (TVRGSVMNPNDHPHGGGEGRSPIGHPSPRTPWGKPALGYKTRKNKKYSDRFIVKRRHDK) form a disordered region.

The protein belongs to the universal ribosomal protein uL2 family. In terms of assembly, part of the 50S ribosomal subunit. Forms a bridge to the 30S subunit in the 70S ribosome.

Functionally, one of the primary rRNA binding proteins. Required for association of the 30S and 50S subunits to form the 70S ribosome, for tRNA binding and peptide bond formation. It has been suggested to have peptidyltransferase activity; this is somewhat controversial. Makes several contacts with the 16S rRNA in the 70S ribosome. The chain is Large ribosomal subunit protein uL2 from Clostridium botulinum (strain Okra / Type B1).